The primary structure comprises 629 residues: Protein SPT2 homolog (629 aa).

The tract at residues 1–522 (MDFDSVLSIA…SGHRILVKPS (522 aa)) is important for interaction with DNA. Residues 45-72 (QAFLKKKAVEQKNKEQQDKKAKEDLLAK) adopt a coiled-coil conformation. Over residues 53-93 (VEQKNKEQQDKKAKEDLLAKRVELKSDRKARAMASRTKDNF) the composition is skewed to basic and acidic residues. Disordered stretches follow at residues 53 to 181 (VEQK…ASSS), 206 to 533 (KTEE…TSSY), and 608 to 629 (EDEE…KKRK). Over residues 111–123 (KGSSTEEQQSSTK) the composition is skewed to polar residues. Residues 127–144 (GDYDDEDNFDYEGTDSES) are compositionally biased toward acidic residues. The stretch at 203-228 (VVKKTEERLRTAEEIRELEMERRVKK) forms a coiled coil. 2 stretches are compositionally biased toward basic and acidic residues: residues 206-247 (KTEE…KDSR) and 257-277 (KHVD…EKHQ). Polar residues-rich tracts occupy residues 278–297 (SSST…TPTS), 305–327 (SNSG…SFQA), 335–345 (SQGQRPATPSD), 353–364 (VSLTQAKSSISG), 387–398 (SNFSTSGPSQKP), 437–450 (NLQS…SRAS), and 462–490 (SGSQ…TKNI). Positions 523-629 (GPALPPITSS…MQRKNAKKRK (107 aa)) are important for interaction with histones. A coiled-coil region spans residues 591 to 629 (WKEQQKEEARSLRMAVLEDEEEERRELEEMQRKNAKKRK).

This sequence belongs to the SPT2 family. In terms of assembly, interacts with histones. Interacts with a heterotetrameric complex formed by histone H3 and H4, especially when the histone tetramer is not bound to DNA.

Its subcellular location is the nucleus. It is found in the nucleolus. In terms of biological role, histone chaperone that stabilizes pre-existing histone tetramers and regulates replication-independent histone exchange on chromatin. Required for normal chromatin refolding in the coding region of transcribed genes, and for the suppression of spurious transcription. Binds DNA and histones and promotes nucleosome assembly (in vitro). Facilitates formation of tetrameric histone complexes containing histone H3 and H4. Modulates RNA polymerase 1-mediated transcription. Binds DNA, with a preference for branched DNA species, such as Y-form DNA and Holliday junction DNA. The sequence is that of Protein SPT2 homolog (spty2d1) from Danio rerio (Zebrafish).